We begin with the raw amino-acid sequence, 119 residues long: Large ribosomal subunit protein bL20 (119 aa).

This sequence belongs to the bacterial ribosomal protein bL20 family.

Functionally, binds directly to 23S ribosomal RNA and is necessary for the in vitro assembly process of the 50S ribosomal subunit. It is not involved in the protein synthesizing functions of that subunit. The chain is Large ribosomal subunit protein bL20 from Aromatoleum aromaticum (strain DSM 19018 / LMG 30748 / EbN1) (Azoarcus sp. (strain EbN1)).